A 179-amino-acid chain; its full sequence is uncharacterized protein (179 aa).

This is an uncharacterized protein from Pasteurella multocida (strain Pm70).